The sequence spans 90 residues: Defensin-like protein 293 (90 aa).

The N-terminal stretch at 1 to 26 is a signal peptide; it reads MTSRAKSLFIFFFLISCTFMLLETDA. Disulfide bonds link Cys63–Cys83, Cys69–Cys88, and Cys75–Cys90.

This sequence belongs to the DEFL family.

It is found in the secreted. This is Defensin-like protein 293 from Arabidopsis thaliana (Mouse-ear cress).